The sequence spans 545 residues: Chaperonin GroEL 1 (545 aa).

Residues 29 to 32 (TLGP), 86 to 90 (DGTTT), G413, 479 to 481 (DAA), and D495 contribute to the ATP site. Residues 525–545 (PEPKENNPAGSGAGMGGDFDY) form a disordered region. A compositionally biased stretch (gly residues) spans 535–545 (SGAGMGGDFDY).

It belongs to the chaperonin (HSP60) family. Forms a cylinder of 14 subunits composed of two heptameric rings stacked back-to-back. Interacts with the co-chaperonin GroES.

It is found in the cytoplasm. The enzyme catalyses ATP + H2O + a folded polypeptide = ADP + phosphate + an unfolded polypeptide.. Functionally, together with its co-chaperonin GroES, plays an essential role in assisting protein folding. The GroEL-GroES system forms a nano-cage that allows encapsulation of the non-native substrate proteins and provides a physical environment optimized to promote and accelerate protein folding. The sequence is that of Chaperonin GroEL 1 from Thermosynechococcus vestitus (strain NIES-2133 / IAM M-273 / BP-1).